The primary structure comprises 296 residues: Cytidine deaminase (296 aa).

CMP/dCMP-type deaminase domains are found at residues 47-167 (TEAE…FGPK) and 186-296 (DSSD…VDPV). 88–90 (NLE) serves as a coordination point for substrate. A Zn(2+)-binding site is contributed by His101. Glu103 functions as the Proton donor in the catalytic mechanism. The Zn(2+) site is built by Cys128 and Cys131.

Belongs to the cytidine and deoxycytidylate deaminase family. As to quaternary structure, homodimer. Zn(2+) serves as cofactor.

It carries out the reaction cytidine + H2O + H(+) = uridine + NH4(+). It catalyses the reaction 2'-deoxycytidine + H2O + H(+) = 2'-deoxyuridine + NH4(+). This enzyme scavenges exogenous and endogenous cytidine and 2'-deoxycytidine for UMP synthesis. This Shewanella sp. (strain MR-7) protein is Cytidine deaminase.